The primary structure comprises 168 residues: NADH-quinone oxidoreductase subunit E 2 (168 aa).

4 residues coordinate [2Fe-2S] cluster: Cys-77, Cys-82, Cys-118, and Cys-122.

Belongs to the complex I 24 kDa subunit family. [2Fe-2S] cluster serves as cofactor.

It carries out the reaction a quinone + NADH + 5 H(+)(in) = a quinol + NAD(+) + 4 H(+)(out). Functionally, NDH-1 shuttles electrons from NADH, via FMN and iron-sulfur (Fe-S) centers, to quinones in the respiratory chain. The immediate electron acceptor for the enzyme in this species is believed to be ubiquinone. Couples the redox reaction to proton translocation (for every two electrons transferred, four hydrogen ions are translocated across the cytoplasmic membrane), and thus conserves the redox energy in a proton gradient. The chain is NADH-quinone oxidoreductase subunit E 2 (nuoE2) from Rhizobium meliloti (strain 1021) (Ensifer meliloti).